Reading from the N-terminus, the 57-residue chain is Large ribosomal subunit protein bL32 (57 aa).

Basic residues predominate over residues 1–20 (MAVPKKKTSKGKRNQRHAVW). The tract at residues 1–23 (MAVPKKKTSKGKRNQRHAVWKAK) is disordered.

Belongs to the bacterial ribosomal protein bL32 family.

This chain is Large ribosomal subunit protein bL32, found in Prochlorococcus marinus (strain SARG / CCMP1375 / SS120).